Consider the following 177-residue polypeptide: ATP synthase subunit delta (177 aa).

This sequence belongs to the ATPase delta chain family. F-type ATPases have 2 components, F(1) - the catalytic core - and F(0) - the membrane proton channel. F(1) has five subunits: alpha(3), beta(3), gamma(1), delta(1), epsilon(1). F(0) has three main subunits: a(1), b(2) and c(10-14). The alpha and beta chains form an alternating ring which encloses part of the gamma chain. F(1) is attached to F(0) by a central stalk formed by the gamma and epsilon chains, while a peripheral stalk is formed by the delta and b chains.

It is found in the cell inner membrane. In terms of biological role, f(1)F(0) ATP synthase produces ATP from ADP in the presence of a proton or sodium gradient. F-type ATPases consist of two structural domains, F(1) containing the extramembraneous catalytic core and F(0) containing the membrane proton channel, linked together by a central stalk and a peripheral stalk. During catalysis, ATP synthesis in the catalytic domain of F(1) is coupled via a rotary mechanism of the central stalk subunits to proton translocation. Its function is as follows. This protein is part of the stalk that links CF(0) to CF(1). It either transmits conformational changes from CF(0) to CF(1) or is implicated in proton conduction. The chain is ATP synthase subunit delta from Shewanella pealeana (strain ATCC 700345 / ANG-SQ1).